A 267-amino-acid chain; its full sequence is Ubiquinone biosynthesis protein COQ4 homolog, mitochondrial (267 aa).

Zn(2+) is bound by residues histidine 170, aspartate 171, histidine 174, and glutamate 186.

The protein belongs to the COQ4 family. As to quaternary structure, component of a multi-subunit COQ enzyme complex. It depends on Zn(2+) as a cofactor.

The protein localises to the mitochondrion inner membrane. The catalysed reaction is a 4-hydroxy-3-methoxy-5-(all-trans-polyprenyl)benzoate + H(+) = a 2-methoxy-6-(all-trans-polyprenyl)phenol + CO2. The protein operates within cofactor biosynthesis; ubiquinone biosynthesis. Lyase that catalyzes the C1-decarboxylation of 4-hydroxy-3-methoxy-5-(all-trans-polyprenyl)benzoic acid into 2-methoxy-6-(all-trans-polyprenyl)phenol during ubiquinone biosynthesis. The chain is Ubiquinone biosynthesis protein COQ4 homolog, mitochondrial from Drosophila pseudoobscura pseudoobscura (Fruit fly).